The following is an 813-amino-acid chain: Leucine--tRNA ligase (813 aa).

The 'HIGH' region signature appears at 41 to 51; it reads PYPSGTLHMGH. The 'KMSKS' region signature appears at 575 to 579; it reads KMSKS. Lysine 578 contacts ATP.

It belongs to the class-I aminoacyl-tRNA synthetase family.

Its subcellular location is the cytoplasm. It carries out the reaction tRNA(Leu) + L-leucine + ATP = L-leucyl-tRNA(Leu) + AMP + diphosphate. This chain is Leucine--tRNA ligase, found in Francisella philomiragia subsp. philomiragia (strain ATCC 25017 / CCUG 19701 / FSC 153 / O#319-036).